The chain runs to 268 residues: 3-methyl-2-oxobutanoate hydroxymethyltransferase (268 aa).

Aspartate 41 and aspartate 80 together coordinate Mg(2+). 3-methyl-2-oxobutanoate-binding positions include 41-42 (DS), aspartate 80, and lysine 110. Glutamate 112 lines the Mg(2+) pocket. Glutamate 178 serves as the catalytic Proton acceptor.

Belongs to the PanB family. As to quaternary structure, homodecamer; pentamer of dimers. Mg(2+) is required as a cofactor.

Its subcellular location is the cytoplasm. It carries out the reaction 3-methyl-2-oxobutanoate + (6R)-5,10-methylene-5,6,7,8-tetrahydrofolate + H2O = 2-dehydropantoate + (6S)-5,6,7,8-tetrahydrofolate. It participates in cofactor biosynthesis; coenzyme A biosynthesis. Its function is as follows. Catalyzes the reversible reaction in which hydroxymethyl group from 5,10-methylenetetrahydrofolate is transferred onto alpha-ketoisovalerate to form ketopantoate. The polypeptide is 3-methyl-2-oxobutanoate hydroxymethyltransferase (Natronomonas pharaonis (strain ATCC 35678 / DSM 2160 / CIP 103997 / JCM 8858 / NBRC 14720 / NCIMB 2260 / Gabara) (Halobacterium pharaonis)).